We begin with the raw amino-acid sequence, 512 residues long: RCC1 domain-containing protein DDB_G0279253 (512 aa).

8 RCC1 repeats span residues 1–56 (MKIY…MIID), 58–134 (GDLY…ACDN), 135–185 (NGNI…NNNN), 197–248 (SGGV…ALSS), 249–319 (ENDV…LLDI), 321–384 (FKNV…LLTN), 386–443 (DKLY…IQVY), and 454–512 (NNNI…FILP). Residues 66–77 (NDSGQLGINSNE) are compositionally biased toward polar residues. 2 disordered regions span residues 66 to 85 (NDSG…QQQQ) and 162 to 200 (STSN…SGGV). A compositionally biased stretch (low complexity) spans 162 to 196 (STSNNKNNNNNNNNNNNNNNNNNNNNNNNNNNNNN).

This Dictyostelium discoideum (Social amoeba) protein is RCC1 domain-containing protein DDB_G0279253.